A 398-amino-acid polypeptide reads, in one-letter code: Acetate kinase (398 aa).

Asn-10 lines the Mg(2+) pocket. Lys-17 serves as a coordination point for ATP. Arg-91 contacts substrate. Asp-148 functions as the Proton donor/acceptor in the catalytic mechanism. ATP is bound by residues 208–212 (HLGNG), 283–285 (DCR), and 331–335 (GIGEN). Glu-385 contacts Mg(2+).

This sequence belongs to the acetokinase family. In terms of assembly, homodimer. Mg(2+) serves as cofactor. The cofactor is Mn(2+).

Its subcellular location is the cytoplasm. The catalysed reaction is acetate + ATP = acetyl phosphate + ADP. The protein operates within metabolic intermediate biosynthesis; acetyl-CoA biosynthesis; acetyl-CoA from acetate: step 1/2. Its function is as follows. Catalyzes the formation of acetyl phosphate from acetate and ATP. Can also catalyze the reverse reaction. This Shewanella loihica (strain ATCC BAA-1088 / PV-4) protein is Acetate kinase.